The sequence spans 143 residues: Nucleoside diphosphate kinase (143 aa).

ATP contacts are provided by Lys-11, Phe-59, Arg-87, Thr-93, Arg-104, and Asn-114. His-117 (pros-phosphohistidine intermediate) is an active-site residue.

It belongs to the NDK family. Homotetramer. It depends on Mg(2+) as a cofactor.

It is found in the cytoplasm. It carries out the reaction a 2'-deoxyribonucleoside 5'-diphosphate + ATP = a 2'-deoxyribonucleoside 5'-triphosphate + ADP. It catalyses the reaction a ribonucleoside 5'-diphosphate + ATP = a ribonucleoside 5'-triphosphate + ADP. Major role in the synthesis of nucleoside triphosphates other than ATP. The ATP gamma phosphate is transferred to the NDP beta phosphate via a ping-pong mechanism, using a phosphorylated active-site intermediate. The protein is Nucleoside diphosphate kinase of Shewanella frigidimarina (strain NCIMB 400).